Reading from the N-terminus, the 125-residue chain is Small ribosomal subunit protein uS13 (125 aa).

The interval 92-125 (RRSLPARGQNTQTNARTRKGRRKTVAGKKKAVKK) is disordered. Positions 107 to 125 (RTRKGRRKTVAGKKKAVKK) are enriched in basic residues.

Belongs to the universal ribosomal protein uS13 family. As to quaternary structure, part of the 30S ribosomal subunit. Forms a loose heterodimer with protein S19. Forms two bridges to the 50S subunit in the 70S ribosome.

Functionally, located at the top of the head of the 30S subunit, it contacts several helices of the 16S rRNA. In the 70S ribosome it contacts the 23S rRNA (bridge B1a) and protein L5 of the 50S subunit (bridge B1b), connecting the 2 subunits; these bridges are implicated in subunit movement. Contacts the tRNAs in the A and P-sites. The chain is Small ribosomal subunit protein uS13 from Chlorobium phaeobacteroides (strain BS1).